A 258-amino-acid chain; its full sequence is Regulatory protein RecX (258 aa).

It belongs to the RecX family.

Its subcellular location is the cytoplasm. Its function is as follows. Modulates RecA activity. The chain is Regulatory protein RecX from Streptococcus thermophilus (strain ATCC BAA-491 / LMD-9).